The chain runs to 148 residues: UPF0756 membrane protein YeaL (148 aa).

4 helical membrane passes run 14-34, 51-71, 86-106, and 121-141; these read ALGFISHNTTVAVSILVLIIV, LTVGIIILTIGVMAPIASGTL, LVAIAVGVFVSWLGGRGVALM, and VLGVALFRGVPVGPLIAAGLV.

The protein belongs to the UPF0756 family.

The protein resides in the cell membrane. The protein is UPF0756 membrane protein YeaL of Salmonella arizonae (strain ATCC BAA-731 / CDC346-86 / RSK2980).